The chain runs to 518 residues: MARAKRVKRDSATNIYRTCKQAGTCPPDVINKVESTTIADKILQYGSAGVFFGGLGISTGKGTGGTTGYVPLGEGPSVRVGGTPTVIRPALVPDTIGPSDIIPVDTLNPVEPSTSSIVPLTESTGPDLLPGEVETIAEIHPGPSRPPTDTPVTSTTSGSSAVLEVAPEPTPPARVRVSRTQYHNPSFQIITESTPTLGESSLADHIVVTSGSGGQAIGGMTPELIELQDFPSRYSFEIEEPTPPRRTSTPMQRLQNVFRRRGGLTNRRLVQQVPVDNPLFLTQPSRLVRFQFDNPVFEEEVTQIFEQDLDTFNEPPDRDFLDVQSLGRPQYSETPAGYVRVSRAGQRRTIRTRSGAQIGSQVHFYRDLSSIDTEDPIELQLLGQHSGDATIVQGPVESTFVDINVDENPLSEISAYSDDLLLDEANEDFSGSQLVVGGRRSTSTYTVPHFETTRSSSYYVQDTKGYYVAYPEDRDVSKDIIYPNPDLPVVIIHTYDTSGDFYLHPSLTKRLKRKRKYL.

The Nuclear localization signal signature appears at methionine 1–aspartate 10. Cysteine 19 and cysteine 25 form a disulfide bridge. The segment at isoleucine 139–alanine 173 is disordered. Low complexity predominate over residues threonine 150–serine 160. The Nuclear localization signal signature appears at lysine 509–tyrosine 517.

This sequence belongs to the papillomaviridae L2 protein family. As to quaternary structure, interacts with major capsid protein L1. Interacts with E2; this interaction inhibits E2 transcriptional activity but not the DNA replication function E2. Interacts with host GADD45GIP1. Interacts with host HSPA8; this interaction is required for L2 nuclear translocation. Interacts with host importins KPNB2 and KPNB3. Forms a complex with importin alpha2-beta1 heterodimers via interaction with the importin alpha2 adapter. Interacts with host DYNLT1; this interaction is essential for virus intracellular transport during entry. Interacts (via C-terminus) with host retromer subunits VPS35 and VPS29. In terms of processing, highly phosphorylated.

The protein resides in the virion. It is found in the host nucleus. The protein localises to the host early endosome. Its subcellular location is the host Golgi apparatus. Functionally, minor protein of the capsid that localizes along the inner surface of the virion, within the central cavities beneath the L1 pentamers. Plays a role in capsid stabilization through interaction with the major capsid protein L1. Once the virion enters the host cell, L2 escorts the genomic DNA into the nucleus by promoting escape from the endosomal compartments and traffic through the host Golgi network. Mechanistically, the C-terminus of L2 possesses a cell-penetrating peptide that protudes from the host endosome, interacts with host cytoplasmic retromer cargo and thereby mediates the capsid delivery to the host trans-Golgi network. Plays a role through its interaction with host dynein in the intracellular microtubule-dependent transport of viral capsid toward the nucleus. Mediates the viral genome import into the nucleus through binding to host importins. Once within the nucleus, L2 localizes viral genomes to host PML bodies in order to activate early gene expression for establishment of infection. Later on, promotes late gene expression by interacting with the viral E2 protein and by inhibiting its transcriptional activation functions. During virion assembly, encapsidates the genome by direct interaction with the viral DNA. This chain is Minor capsid protein L2, found in Human papillomavirus 20.